A 77-amino-acid polypeptide reads, in one-letter code: Distinctin-like peptide (77 aa).

The N-terminal stretch at 1-19 is a signal peptide; it reads LKKSLFLVTFLALVPLFLC. A propeptide spanning residues 20–39 is cleaved from the precursor; the sequence is EEEKREEENEERQDDDQSEE.

It belongs to the frog skin active peptide (FSAP) family. Expressed by the skin glands.

Its subcellular location is the secreted. In terms of biological role, has antimicrobial activity. The protein is Distinctin-like peptide of Pithecopus azureus (Orange-legged monkey tree frog).